The following is a 103-amino-acid chain: uncharacterized protein (103 aa).

This is an uncharacterized protein from Shigella flexneri.